The following is a 352-amino-acid chain: Protein RecA (352 aa).

Gly65–Thr72 contributes to the ATP binding site. The segment at Glu332 to Lys352 is disordered. Residues Glu333–Lys352 are compositionally biased toward basic and acidic residues.

The protein belongs to the RecA family.

The protein localises to the cytoplasm. In terms of biological role, can catalyze the hydrolysis of ATP in the presence of single-stranded DNA, the ATP-dependent uptake of single-stranded DNA by duplex DNA, and the ATP-dependent hybridization of homologous single-stranded DNAs. It interacts with LexA causing its activation and leading to its autocatalytic cleavage. The polypeptide is Protein RecA (Photobacterium profundum (strain SS9)).